The sequence spans 879 residues: Fanconi anemia core complex-associated protein 100 (879 aa).

As to quaternary structure, belongs to the multisubunit FA complex composed of FANCA, FANCB, FANCC, FANCE, FANCF, FANCG, FANCL/PHF9, FANCM, FAAP24 and FAAP100. Forms a subcomplex with FANCB and FANCL.

The protein resides in the nucleus. Its function is as follows. Plays a role in Fanconi anemia-associated DNA damage response network. Regulates FANCD2 monoubiquitination and the stability of the FA core complex. Induces chromosomal instability as well as hypersensitivity to DNA cross-linking agents, when repressed. This Mus musculus (Mouse) protein is Fanconi anemia core complex-associated protein 100.